The sequence spans 396 residues: Methionine import ATP-binding protein MetN 2 (396 aa).

Residues 41-280 (VSFELVGKVF…PRHGATRALL (240 aa)) form the ABC transporter domain. 77–84 (GRSGAGKS) is an ATP binding site.

This sequence belongs to the ABC transporter superfamily. Methionine importer (TC 3.A.1.24) family. As to quaternary structure, the complex is composed of two ATP-binding proteins (MetN), two transmembrane proteins (MetI) and a solute-binding protein (MetQ).

It is found in the cell inner membrane. The catalysed reaction is L-methionine(out) + ATP + H2O = L-methionine(in) + ADP + phosphate + H(+). The enzyme catalyses D-methionine(out) + ATP + H2O = D-methionine(in) + ADP + phosphate + H(+). Its function is as follows. Part of the ABC transporter complex MetNIQ involved in methionine import. Responsible for energy coupling to the transport system. The chain is Methionine import ATP-binding protein MetN 2 from Burkholderia pseudomallei (strain K96243).